The chain runs to 1012 residues: Translation initiation factor IF-2, chloroplastic (1012 aa).

A compositionally biased stretch (low complexity) spans 75 to 102 (GNSVSLDSNSNSSSSSKSGGDDGTGFVL). Disordered stretches follow at residues 75–132 (GNSV…VEER), 147–294 (EKLG…KEKK), and 319–340 (APPK…RKKG). Over residues 152 to 175 (SKVNGDKNNGSVNKPVRNNANASP) the composition is skewed to polar residues. A compositionally biased stretch (low complexity) spans 183–194 (SAASLKSKTLKS). The segment covering 208-231 (VVKEVPKPSYNKNEEEKSQTRGGE) has biased composition (basic and acidic residues). A compositionally biased stretch (pro residues) spans 240-257 (PQPPSKPQPLKPQQPSKP). Residues 277-294 (VLRDKGAAETSVKSKEKK) are compositionally biased toward basic and acidic residues. One can recognise a tr-type G domain in the interval 488 to 661 (DRPPVITIMG…MLVAELQELK (174 aa)). The tract at residues 497–504 (GHVDHGKT) is G1. Residue 497–504 (GHVDHGKT) participates in GTP binding. The interval 522-526 (GITQG) is G2. The G3 stretch occupies residues 547–550 (DTPG). Residues 547-551 (DTPGH) and 601-604 (NKID) each bind GTP. A G4 region spans residues 601-604 (NKID). The G5 stretch occupies residues 637-639 (SAL).

This sequence belongs to the TRAFAC class translation factor GTPase superfamily. Classic translation factor GTPase family. IF-2 subfamily.

The protein resides in the plastid. It is found in the chloroplast. In terms of biological role, one of the essential components for the initiation of protein synthesis. Protects formylmethionyl-tRNA from spontaneous hydrolysis and promotes its binding to the 30S ribosomal subunits. Also involved in the hydrolysis of GTP during the formation of the 70S ribosomal complex. The sequence is that of Translation initiation factor IF-2, chloroplastic (IF2CP) from Phaseolus vulgaris (Kidney bean).